Reading from the N-terminus, the 761-residue chain is Signal transducer and transcription activator (761 aa).

An SH2 domain is found at Trp594–Val658. Tyr711 is modified (phosphotyrosine; by JAK).

This sequence belongs to the transcription factor STAT family. Forms a homodimer or a heterodimer with a related family member. Tyrosine phosphorylated by hopscotch. Phosphorylation is required for DNA-binding activity and dimerization.

It localises to the cytoplasm. Its subcellular location is the nucleus. Its function is as follows. Might play a role in signal transduction and activation of transcription. Plays an important role in the segmental pattern formation in the early embryo by activating specific stripes of pair rule gene expression in early development as part of the Janus kinase-STAT pathway. Might play a role in male germline stem cell maintenance. In Drosophila melanogaster (Fruit fly), this protein is Signal transducer and transcription activator (Stat92E).